The primary structure comprises 250 residues: Small ribosomal subunit protein uS2 (250 aa).

The disordered stretch occupies residues 225–250; the sequence is GAQGGRQARGEDLGAAVEAPSEDALA.

Belongs to the universal ribosomal protein uS2 family.

The polypeptide is Small ribosomal subunit protein uS2 (Rhizorhabdus wittichii (strain DSM 6014 / CCUG 31198 / JCM 15750 / NBRC 105917 / EY 4224 / RW1) (Sphingomonas wittichii)).